Here is a 402-residue protein sequence, read N- to C-terminus: Arginine deiminase (402 aa).

Cysteine 392 (amidino-cysteine intermediate) is an active-site residue.

It belongs to the arginine deiminase family.

Its subcellular location is the cytoplasm. It carries out the reaction L-arginine + H2O = L-citrulline + NH4(+). It participates in amino-acid degradation; L-arginine degradation via ADI pathway; carbamoyl phosphate from L-arginine: step 1/2. This is Arginine deiminase from Mycolicibacterium gilvum (strain PYR-GCK) (Mycobacterium gilvum (strain PYR-GCK)).